We begin with the raw amino-acid sequence, 175 residues long: Shikimate kinase (175 aa).

12 to 17 contacts ATP; that stretch reads GAGKTT. Thr-16 is a Mg(2+) binding site. Residues Asp-34, Arg-58, and Gly-80 each contribute to the substrate site. Arg-117 is a binding site for ATP. Residue Arg-136 participates in substrate binding.

This sequence belongs to the shikimate kinase family. Monomer. Mg(2+) serves as cofactor.

The protein localises to the cytoplasm. The enzyme catalyses shikimate + ATP = 3-phosphoshikimate + ADP + H(+). The protein operates within metabolic intermediate biosynthesis; chorismate biosynthesis; chorismate from D-erythrose 4-phosphate and phosphoenolpyruvate: step 5/7. Catalyzes the specific phosphorylation of the 3-hydroxyl group of shikimic acid using ATP as a cosubstrate. This chain is Shikimate kinase, found in Saccharopolyspora erythraea (strain ATCC 11635 / DSM 40517 / JCM 4748 / NBRC 13426 / NCIMB 8594 / NRRL 2338).